We begin with the raw amino-acid sequence, 840 residues long: Phosphatidylglycerol lysyltransferase (840 aa).

Residues 1–8 (MNQEVKNK) are Cytoplasmic-facing. The chain crosses the membrane as a helical span at residues 9–29 (IFSILKITFATALFIFVVITL). Residues 30-52 (YRELSGINFKDTLVEFSKINRMS) are Extracellular-facing. The chain crosses the membrane as a helical span at residues 53–73 (LVLLFIGGGASLVILSMYDVI). Topologically, residues 74 to 89 (LSRALKMDISLGKVLR) are cytoplasmic. A helical transmembrane segment spans residues 90–110 (VSYIINALNAIVGFGGFIGAG). The Extracellular portion of the chain corresponds to 111 to 128 (VRAMVYKNYTHDKKKLVH). Residues 129-149 (FISLILISMLTGLSLLSLLIV) form a helical membrane-spanning segment. Over 150–161 (FHVFDASLILNK) the chain is Cytoplasmic. A helical transmembrane segment spans residues 162–182 (ITWVRWVLYAVSLFLPLFIIY). The Extracellular segment spans residues 183-200 (SMVRPPDKNNRYVGLYCT). Residues 201–221 (LVSCVEWLAAAVVLYFCGVIV) form a helical membrane-spanning segment. Residues 222-229 (DVHVSFMS) lie on the Cytoplasmic side of the membrane. A helical membrane pass occupies residues 230 to 250 (FIAIFIIAALSGLVSFIPGGF). Over 251–271 (GAFDLVVLLGFKTLGVPEEKV) the chain is Extracellular. Residues 272 to 292 (LLMLLLYRFAYYFVPVIIALI) form a helical membrane-spanning segment. Residues 293-337 (LSSFEFGTSAKKYIEGSKYFIPAKDVTSFLMSYQKDIIAKIPSLS) lie on the Cytoplasmic side of the membrane. A helical membrane pass occupies residues 338 to 358 (LAILVFFTSMIFFVNNLTIVY). Residues 359–369 (DALYDGNHLTY) lie on the Extracellular side of the membrane. A helical transmembrane segment spans residues 370–390 (YLLLAIHTSACLLLLLNVVGI). Residues 391-394 (YKQS) are Cytoplasmic-facing. Helical transmembrane passes span 395–415 (RRAIIYAMISIILIIVATLFT) and 416–436 (YASYILITWLVIIFALLIVAF). The Cytoplasmic segment spans residues 437 to 450 (RRARRLKRPIRMRN). The helical transmembrane segment at 451-471 (LVAMLLFSIFILYINHIFIAG) threads the bilayer. The Extracellular segment spans residues 472-489 (TFYALDVYTIEMHTSVLK). The helical transmembrane segment at 490 to 510 (YYFWITILIIAIIVGAIAWLF) threads the bilayer. The Cytoplasmic segment spans residues 511–840 (DYQFSKVRIS…SKVMRVIRHK (330 aa)).

Belongs to the LPG synthase family.

The protein resides in the cell membrane. It carries out the reaction L-lysyl-tRNA(Lys) + a 1,2-diacyl-sn-glycero-3-phospho-(1'-sn-glycerol) = a 1,2-diacyl-sn-glycero-3-phospho-1'-(3'-O-L-lysyl)-sn-glycerol + tRNA(Lys). Functionally, catalyzes the transfer of a lysyl group from L-lysyl-tRNA(Lys) to membrane-bound phosphatidylglycerol (PG), which produces lysylphosphatidylglycerol (LPG), a major component of the bacterial membrane with a positive net charge. LPG synthesis contributes to bacterial virulence as it is involved in the resistance mechanism against cationic antimicrobial peptides (CAMP) produces by the host's immune system (defensins, cathelicidins) and by the competing microorganisms (bacteriocins). In fact, the modification of anionic phosphatidylglycerol with positively charged L-lysine results in repulsion of the peptides. The sequence is that of Phosphatidylglycerol lysyltransferase (mprF) from Staphylococcus aureus (strain MRSA252).